The chain runs to 61 residues: Large ribosomal subunit protein eL24 (61 aa).

Residues cysteine 7, cysteine 10, cysteine 33, and cysteine 37 each coordinate Zn(2+). Residues 7 to 37 (CSFCGGDIPPATGMMHVRNDGTILWFCSNKC) form a C4-type zinc finger.

It belongs to the eukaryotic ribosomal protein eL24 family. Part of the 50S ribosomal subunit. Forms a cluster with proteins L3 and L14. It depends on Zn(2+) as a cofactor.

Functionally, binds to the 23S rRNA. The sequence is that of Large ribosomal subunit protein eL24 from Metallosphaera sedula (strain ATCC 51363 / DSM 5348 / JCM 9185 / NBRC 15509 / TH2).